The primary structure comprises 240 residues: Cysteine-rich venom protein catrin (240 aa).

The signal sequence occupies residues 1 to 19 (MIAFIVLPILAAVLQQSSG). The SCP domain occupies 38 to 166 (VDLHNFLRRS…KYSYFYVCQY (129 aa)). Disulfide bonds link Cys75–Cys153, Cys92–Cys167, Cys148–Cys164, Cys186–Cys193, Cys189–Cys198, Cys202–Cys235, Cys211–Cys229, and Cys220–Cys233. The ShKT domain occupies 202 to 235 (CTKEDKYTNCKSLVQQAGCQDKQMQSDCPAICFC).

This sequence belongs to the CRISP family. Expressed by the venom gland.

The protein resides in the secreted. In terms of biological role, catrin-2 weakly blocks contraction of smooth muscle elicited by high potassium-induced depolarization, but does not block caffeine-stimulated contraction. Catrin-1 has no significant effect. May target voltage-gated calcium channels on smooth muscle. In Crotalus atrox (Western diamondback rattlesnake), this protein is Cysteine-rich venom protein catrin.